We begin with the raw amino-acid sequence, 90 residues long: Phosphocarrier protein HPr (90 aa).

The HPr domain occupies 1–89; it reads MPALEITIIN…ELINNRFDEG (89 aa). His-15 serves as the catalytic Pros-phosphohistidine intermediate.

Belongs to the HPr family.

The protein resides in the cytoplasm. In terms of biological role, general (non sugar-specific) component of the phosphoenolpyruvate-dependent sugar phosphotransferase system (sugar PTS). This major carbohydrate active-transport system catalyzes the phosphorylation of incoming sugar substrates concomitantly with their translocation across the cell membrane. The phosphoryl group from phosphoenolpyruvate (PEP) is transferred to the phosphoryl carrier protein HPr by enzyme I. Phospho-HPr then transfers it to the PTS EIIA domain. In Pseudomonas aeruginosa (strain ATCC 15692 / DSM 22644 / CIP 104116 / JCM 14847 / LMG 12228 / 1C / PRS 101 / PAO1), this protein is Phosphocarrier protein HPr (ptsH).